The primary structure comprises 435 residues: Methylenetetrahydrofolate--tRNA-(uracil-5-)-methyltransferase TrmFO (435 aa).

Position 9–14 (9–14 (GAGLAG)) interacts with FAD.

It belongs to the MnmG family. TrmFO subfamily. It depends on FAD as a cofactor.

Its subcellular location is the cytoplasm. The enzyme catalyses uridine(54) in tRNA + (6R)-5,10-methylene-5,6,7,8-tetrahydrofolate + NADH + H(+) = 5-methyluridine(54) in tRNA + (6S)-5,6,7,8-tetrahydrofolate + NAD(+). It catalyses the reaction uridine(54) in tRNA + (6R)-5,10-methylene-5,6,7,8-tetrahydrofolate + NADPH + H(+) = 5-methyluridine(54) in tRNA + (6S)-5,6,7,8-tetrahydrofolate + NADP(+). Its function is as follows. Catalyzes the folate-dependent formation of 5-methyl-uridine at position 54 (M-5-U54) in all tRNAs. The protein is Methylenetetrahydrofolate--tRNA-(uracil-5-)-methyltransferase TrmFO of Staphylococcus saprophyticus subsp. saprophyticus (strain ATCC 15305 / DSM 20229 / NCIMB 8711 / NCTC 7292 / S-41).